We begin with the raw amino-acid sequence, 207 residues long: Large ribosomal subunit protein uL4 (207 aa).

The disordered stretch occupies residues 48-70 (KAQKTRSEVSGGGAKPWRQKGTG).

This sequence belongs to the universal ribosomal protein uL4 family. In terms of assembly, part of the 50S ribosomal subunit.

One of the primary rRNA binding proteins, this protein initially binds near the 5'-end of the 23S rRNA. It is important during the early stages of 50S assembly. It makes multiple contacts with different domains of the 23S rRNA in the assembled 50S subunit and ribosome. In terms of biological role, forms part of the polypeptide exit tunnel. This is Large ribosomal subunit protein uL4 from Francisella tularensis subsp. holarctica (strain FTNF002-00 / FTA).